The sequence spans 309 residues: Glutaminase (309 aa).

Positions 65, 117, 162, 169, 193, 245, and 263 each coordinate substrate.

The protein belongs to the glutaminase family. In terms of assembly, homotetramer.

It catalyses the reaction L-glutamine + H2O = L-glutamate + NH4(+). This Geobacillus thermodenitrificans (strain NG80-2) protein is Glutaminase.